The following is a 41-amino-acid chain: Photosystem I reaction center subunit IX (41 aa).

Residues 7–27 (YLSTAPVVAAAWFTFTAGLLI) form a helical membrane-spanning segment.

It belongs to the PsaJ family.

It localises to the plastid. It is found in the chloroplast thylakoid membrane. Its function is as follows. May help in the organization of the PsaE and PsaF subunits. This chain is Photosystem I reaction center subunit IX, found in Oltmannsiellopsis viridis (Marine flagellate).